Consider the following 582-residue polypeptide: DNA mismatch repair protein MutL (582 aa).

This sequence belongs to the DNA mismatch repair MutL/HexB family.

This protein is involved in the repair of mismatches in DNA. It is required for dam-dependent methyl-directed DNA mismatch repair. May act as a 'molecular matchmaker', a protein that promotes the formation of a stable complex between two or more DNA-binding proteins in an ATP-dependent manner without itself being part of a final effector complex. The polypeptide is DNA mismatch repair protein MutL (Acidiphilium cryptum (strain JF-5)).